The sequence spans 306 residues: Elongation factor Ts (306 aa).

The segment at T80–V83 is involved in Mg(2+) ion dislocation from EF-Tu.

The protein belongs to the EF-Ts family.

It localises to the cytoplasm. Associates with the EF-Tu.GDP complex and induces the exchange of GDP to GTP. It remains bound to the aminoacyl-tRNA.EF-Tu.GTP complex up to the GTP hydrolysis stage on the ribosome. In Methylorubrum populi (strain ATCC BAA-705 / NCIMB 13946 / BJ001) (Methylobacterium populi), this protein is Elongation factor Ts.